The following is a 160-amino-acid chain: Dihydrofolate reductase (160 aa).

The 160-residue stretch at 1–160 (MLIAIWAMTQ…NVNYYRKKQQ (160 aa)) folds into the DHFR domain. 5-7 (IWA) contacts substrate. NADP(+) contacts are provided by residues 6-7 (WA) and 14-19 (IGNNNT). Glu27 serves as a coordination point for substrate. An NADP(+)-binding site is contributed by 43–46 (GRKT). Residue Arg57 coordinates substrate. NADP(+)-binding positions include 62-65 (LSKD) and 101-106 (CGGKSV). Ser120 serves as a coordination point for substrate.

This sequence belongs to the dihydrofolate reductase family.

The catalysed reaction is (6S)-5,6,7,8-tetrahydrofolate + NADP(+) = 7,8-dihydrofolate + NADPH + H(+). It participates in cofactor biosynthesis; tetrahydrofolate biosynthesis; 5,6,7,8-tetrahydrofolate from 7,8-dihydrofolate: step 1/1. In terms of biological role, key enzyme in folate metabolism. Catalyzes an essential reaction for de novo glycine and purine synthesis, and for DNA precursor synthesis. This chain is Dihydrofolate reductase (folA), found in Mycoplasma genitalium (strain ATCC 33530 / DSM 19775 / NCTC 10195 / G37) (Mycoplasmoides genitalium).